The sequence spans 95 residues: Aspartyl/glutamyl-tRNA(Asn/Gln) amidotransferase subunit C (95 aa).

This sequence belongs to the GatC family. As to quaternary structure, heterotrimer of A, B and C subunits.

It catalyses the reaction L-glutamyl-tRNA(Gln) + L-glutamine + ATP + H2O = L-glutaminyl-tRNA(Gln) + L-glutamate + ADP + phosphate + H(+). It carries out the reaction L-aspartyl-tRNA(Asn) + L-glutamine + ATP + H2O = L-asparaginyl-tRNA(Asn) + L-glutamate + ADP + phosphate + 2 H(+). Allows the formation of correctly charged Asn-tRNA(Asn) or Gln-tRNA(Gln) through the transamidation of misacylated Asp-tRNA(Asn) or Glu-tRNA(Gln) in organisms which lack either or both of asparaginyl-tRNA or glutaminyl-tRNA synthetases. The reaction takes place in the presence of glutamine and ATP through an activated phospho-Asp-tRNA(Asn) or phospho-Glu-tRNA(Gln). In Prochlorococcus marinus (strain NATL2A), this protein is Aspartyl/glutamyl-tRNA(Asn/Gln) amidotransferase subunit C.